A 214-amino-acid chain; its full sequence is Thymidylate kinase (214 aa).

12–19 contributes to the ATP binding site; sequence GLDGSGKS.

It belongs to the thymidylate kinase family.

The enzyme catalyses dTMP + ATP = dTDP + ADP. Functionally, phosphorylation of dTMP to form dTDP in both de novo and salvage pathways of dTTP synthesis. The sequence is that of Thymidylate kinase from Bdellovibrio bacteriovorus (strain ATCC 15356 / DSM 50701 / NCIMB 9529 / HD100).